A 379-amino-acid polypeptide reads, in one-letter code: Nucleosome assembly protein 1;2 (379 aa).

Residues 26 to 80 (VNALKNKLQNLAGQHSDVLENLTPPVRKRVEFLREIQNQYDEMEAKFFEERAALE) are a coiled coil. At Ser-41 the chain carries Phosphoserine. A Nuclear export signal motif is present at residues 47–62 (LTPPVRKRVEFLREIQ). A Nuclear localization signal motif is present at residues 222-227 (KKKPKK). The segment at 298–379 (AVEADDLDIE…GERPPECKQQ (82 aa)) is disordered. Over residues 299-342 (VEADDLDIEDDDDEIDEDDDEEDEEDDEDDEEEDDEDDDEEEEA) the composition is skewed to acidic residues. The segment covering 347 to 360 (KSKKKSSAGHKKAG) has biased composition (basic residues). Cys-376 bears the Cysteine methyl ester mark. Cys-376 is lipidated: S-farnesyl cysteine. The propeptide at 377–379 (KQQ) is removed in mature form.

This sequence belongs to the nucleosome assembly protein (NAP) family. In terms of assembly, can form homomeric and heteromeric protein complexes with NAP1;1, NAP1;3 and NAP1;4. Binds histone H2A. In terms of tissue distribution, ubiquitous.

The protein resides in the nucleus. It is found in the cytoplasm. Its function is as follows. May modulate chromatin structure by regulation of nucleosome assembly/disassembly. May function in nucleotide excision repair (NER). Involved in somatic homologous recombination. This chain is Nucleosome assembly protein 1;2 (NAP1;2), found in Arabidopsis thaliana (Mouse-ear cress).